A 204-amino-acid polypeptide reads, in one-letter code: Guanylate kinase (204 aa).

The region spanning 5–184 (GLLLVLSGPS…AVDHIKSIVE (180 aa)) is the Guanylate kinase-like domain. 12 to 19 (GPSGVGKG) lines the ATP pocket.

This sequence belongs to the guanylate kinase family.

Its subcellular location is the cytoplasm. It carries out the reaction GMP + ATP = GDP + ADP. In terms of biological role, essential for recycling GMP and indirectly, cGMP. The sequence is that of Guanylate kinase from Lactobacillus johnsonii (strain CNCM I-12250 / La1 / NCC 533).